Consider the following 977-residue polypeptide: Serine/threonine-protein kinase N2 (977 aa).

REM-1 domains are found at residues 24–100 (NLDF…HIVV), 114–194 (DTPK…TSEI), and 200–280 (DVTT…ELPK). Positions 298-468 (PPNSPRQSIM…LYLEPQGTLF (171 aa)) constitute a C2 domain. Disordered stretches follow at residues 342-381 (GRSK…LSKS) and 531-576 (AADL…KRNS). Residues 358 to 378 (EARSSFMSRGNKNKSGSSRTL) are compositionally biased toward polar residues. The Protein kinase domain maps to 650–909 (FKCVAVLGRG…AEEVKRHPFF (260 aa)). ATP-binding positions include 656–664 (LGRGHFGKV) and lysine 679. Residue aspartate 775 is the Proton acceptor of the active site. The region spanning 910–977 (RDMDWPGLLA…ADFDYIADWC (68 aa)) is the AGC-kinase C-terminal domain.

The protein belongs to the protein kinase superfamily. AGC Ser/Thr protein kinase family. PKC subfamily. Post-translationally, autophosphorylated. Phosphorylated. In terms of processing, proteolytically cleaved.

The protein resides in the cytoplasm. It localises to the nucleus. The protein localises to the membrane. It is found in the cell projection. Its subcellular location is the lamellipodium. The protein resides in the cytoskeleton. It localises to the cleavage furrow. The protein localises to the midbody. It is found in the cell junction. It catalyses the reaction L-seryl-[protein] + ATP = O-phospho-L-seryl-[protein] + ADP + H(+). The catalysed reaction is L-threonyl-[protein] + ATP = O-phospho-L-threonyl-[protein] + ADP + H(+). Its activity is regulated as follows. Kinase activity is activated upon binding to GTP-bound Rho/Rac GTPases. Activated by lipids, particularly cardiolipin and to a lesser extent by other acidic phospholipids and unsaturated fatty acids. Two specific sites, Thr-809 (activation loop of the kinase domain) and Thr-951 (turn motif), may be needed to be phosphorylated for its full activation. In terms of biological role, pkc-related serine/threonine-protein kinase and Rho/Rac effector protein that participates in specific signal transduction responses in the cell. May play a role in the regulation of cell cycle progression, actin cytoskeleton assembly, cell migration, cell adhesion and transcription activation signaling processes. The chain is Serine/threonine-protein kinase N2 (pkn2) from Danio rerio (Zebrafish).